Reading from the N-terminus, the 188-residue chain is Elongation factor P (188 aa).

The protein belongs to the elongation factor P family.

The protein localises to the cytoplasm. It functions in the pathway protein biosynthesis; polypeptide chain elongation. Its function is as follows. Involved in peptide bond synthesis. Stimulates efficient translation and peptide-bond synthesis on native or reconstituted 70S ribosomes in vitro. Probably functions indirectly by altering the affinity of the ribosome for aminoacyl-tRNA, thus increasing their reactivity as acceptors for peptidyl transferase. The sequence is that of Elongation factor P from Parabacteroides distasonis (strain ATCC 8503 / DSM 20701 / CIP 104284 / JCM 5825 / NCTC 11152).